The sequence spans 511 residues: Synaptotagmin-6 (511 aa).

Topologically, residues methionine 1–serine 59 are vesicular. A cysteine motif region spans residues cysteine 12–glutamine 38. The chain crosses the membrane as a helical span at residues leucine 60–phenylalanine 80. Residues tryptophan 81–leucine 511 are Cytoplasmic-facing. The segment covering alanine 93–serine 103 has biased composition (low complexity). Disordered regions lie at residues alanine 93–lysine 118 and threonine 157–glutamine 182. The segment covering glutamine 160–histidine 172 has biased composition (polar residues). Serine 217 carries the post-translational modification Phosphoserine. 2 C2 domains span residues serine 230–lysine 351 and aspartate 362–histidine 495. Aspartate 261, aspartate 267, aspartate 319, phenylalanine 320, aspartate 321, serine 324, aspartate 327, aspartate 393, aspartate 399, aspartate 453, and aspartate 455 together coordinate Ca(2+). Positions methionine 483–leucine 511 are necessary for cell membrane association (isoform 2).

Belongs to the synaptotagmin family. Isoform 1: Homodimer; disulfide-linked via the cysteine motif. Isoform 1: Can also form heterodimers with SYT3, SYT7, SYT9 and SYT10. Isoform 1: Interacts with STX1A, STX1B and STX2; the interaction is Ca(2+)-dependent. Isoform 2: Is not able to form homodimer and heterodimers. The cofactor is Ca(2+).

Its subcellular location is the cytoplasmic vesicle. It is found in the secretory vesicle. The protein localises to the synaptic vesicle membrane. It localises to the membrane. The protein resides in the cytoplasm. Its subcellular location is the cytosol. It is found in the cell membrane. Functionally, may be involved in Ca(2+)-dependent exocytosis of secretory vesicles through Ca(2+) and phospholipid binding to the C2 domain or may serve as Ca(2+) sensors in the process of vesicular trafficking and exocytosis. May mediate Ca(2+)-regulation of exocytosis in acrosomal reaction in sperm. This Rattus norvegicus (Rat) protein is Synaptotagmin-6 (Syt6).